The primary structure comprises 173 residues: RNA pyrophosphohydrolase (173 aa).

One can recognise a Nudix hydrolase domain in the interval proline 11–lysine 164. Positions glycine 52–glycine 73 match the Nudix box motif.

It belongs to the Nudix hydrolase family. RppH subfamily. A divalent metal cation serves as cofactor.

In terms of biological role, accelerates the degradation of transcripts by removing pyrophosphate from the 5'-end of triphosphorylated RNA, leading to a more labile monophosphorylated state that can stimulate subsequent ribonuclease cleavage. The protein is RNA pyrophosphohydrolase of Bartonella clarridgeiae.